The primary structure comprises 2603 residues: Protein SABRE (2603 aa).

The first 35 residues, 1–35, serve as a signal peptide directing secretion; the sequence is MAASPAKFFFGFLIVSIVLWMIFMLFAWMLSRVLG. N-linked (GlcNAc...) asparagine glycosylation is present at asparagine 196. The disordered stretch occupies residues 259 to 287; sequence FPKSKQSSASLRSDEVRTSATAASSAKKP. Asparagine 331, asparagine 486, asparagine 597, asparagine 807, asparagine 867, asparagine 887, asparagine 1154, asparagine 1249, asparagine 1280, and asparagine 1408 each carry an N-linked (GlcNAc...) asparagine glycan. Residues 786 to 814 form a disordered region; it reads PESGCNKGISSVKDGGPSEKINQSNSVNK. Residues 1416–1436 form a disordered region; that stretch reads FHQSPSSTEHPTDVGTVYSSQ. N-linked (GlcNAc...) asparagine glycosylation is found at asparagine 1492 and asparagine 1659. Disordered stretches follow at residues 1656–1676 and 1717–1777; these read EFEN…DDDG and EPPK…DDIG. The span at 1731-1748 shows a compositional bias: basic and acidic residues; sequence KIHEENQKESCPETHQGE. Positions 1749–1766 are enriched in polar residues; it reads MSRSSASPGRNLPSSPSH. Positions 1995–2023 form a coiled coil; it reads VEEVELAKINLEEKERERKLLLDDIRKLS. Asparagine 2333 carries an N-linked (GlcNAc...) asparagine glycan. Disordered stretches follow at residues 2339 to 2380, 2448 to 2479, and 2554 to 2603; these read EQQE…RPRK, GKKF…KPDQ, and IRRH…DFRE. Positions 2343–2380 are enriched in basic and acidic residues; the sequence is DFSKQKVKEIKPVKSGRSSHEEKKAGKSHEEKKSRPRK. Asparagine 2467 carries an N-linked (GlcNAc...) asparagine glycan. Residues 2554–2565 show a composition bias toward basic residues; it reads IRRHTKKFRPRS. Residues 2566–2583 are compositionally biased toward polar residues; sequence QRGSTSQQRESLPSSPIE. The span at 2586–2603 shows a compositional bias: low complexity; that stretch reads PFESGYSSGSSPYEDFRE.

The protein belongs to the SABRE family. In terms of tissue distribution, highest levels in leaves, also expressed in leaves, flowers, and siliques, and, to a lower extent, in roots and stems.

It is found in the secreted. Its subcellular location is the golgi apparatus. Its function is as follows. May be involved in membrane trafficking. Required for cell expansion, especially in root cortex, probably by counteracting the action of ethylene in promoting cells radial expansion. Involved in female organ development. Antagonistically interacts with ethylene signaling to regulate plant responses to Pi starvation. In Arabidopsis thaliana (Mouse-ear cress), this protein is Protein SABRE.